Here is a 459-residue protein sequence, read N- to C-terminus: Bifunctional protein GlmU (459 aa).

The segment at 1 to 229 is pyrophosphorylase; sequence MLTQEIIIVI…YEEILGINNK (229 aa). Residues 11–14, Lys25, Gln76, 81–82, 103–105, Gly140, Glu154, and Asn227 each bind UDP-N-acetyl-alpha-D-glucosamine; these read LAAG, GT, and YGD. Asp105 is a binding site for Mg(2+). Residue Asn227 participates in Mg(2+) binding. A linker region spans residues 230 to 250; the sequence is LQLSNLEKIFQKKQINKLLIN. Positions 251 to 459 are N-acetyltransferase; it reads GVTIKDPSHF…MRSKKIIKKN (209 aa). The UDP-N-acetyl-alpha-D-glucosamine site is built by Arg333 and Lys351. The active-site Proton acceptor is His363. UDP-N-acetyl-alpha-D-glucosamine is bound by residues Tyr366 and Asn377. Residues Ala380, 386–387, Ser405, and Ala423 each bind acetyl-CoA; that span reads NY.

In the N-terminal section; belongs to the N-acetylglucosamine-1-phosphate uridyltransferase family. The protein in the C-terminal section; belongs to the transferase hexapeptide repeat family. As to quaternary structure, homotrimer. Mg(2+) serves as cofactor.

It is found in the cytoplasm. It catalyses the reaction alpha-D-glucosamine 1-phosphate + acetyl-CoA = N-acetyl-alpha-D-glucosamine 1-phosphate + CoA + H(+). It carries out the reaction N-acetyl-alpha-D-glucosamine 1-phosphate + UTP + H(+) = UDP-N-acetyl-alpha-D-glucosamine + diphosphate. Its pathway is nucleotide-sugar biosynthesis; UDP-N-acetyl-alpha-D-glucosamine biosynthesis; N-acetyl-alpha-D-glucosamine 1-phosphate from alpha-D-glucosamine 6-phosphate (route II): step 2/2. The protein operates within nucleotide-sugar biosynthesis; UDP-N-acetyl-alpha-D-glucosamine biosynthesis; UDP-N-acetyl-alpha-D-glucosamine from N-acetyl-alpha-D-glucosamine 1-phosphate: step 1/1. It participates in bacterial outer membrane biogenesis; LPS lipid A biosynthesis. Catalyzes the last two sequential reactions in the de novo biosynthetic pathway for UDP-N-acetylglucosamine (UDP-GlcNAc). The C-terminal domain catalyzes the transfer of acetyl group from acetyl coenzyme A to glucosamine-1-phosphate (GlcN-1-P) to produce N-acetylglucosamine-1-phosphate (GlcNAc-1-P), which is converted into UDP-GlcNAc by the transfer of uridine 5-monophosphate (from uridine 5-triphosphate), a reaction catalyzed by the N-terminal domain. In Buchnera aphidicola subsp. Acyrthosiphon pisum (strain 5A), this protein is Bifunctional protein GlmU.